A 330-amino-acid chain; its full sequence is tRNA U34 carboxymethyltransferase (330 aa).

Carboxy-S-adenosyl-L-methionine-binding positions include Lys-98, Trp-112, Lys-117, Gly-137, 187–188 (ME), Met-203, Tyr-207, and Arg-322. The disordered stretch occupies residues 309-330 (NPSKTIEGYPGPKRATLIAEKP).

It belongs to the class I-like SAM-binding methyltransferase superfamily. CmoB family. Homotetramer.

The catalysed reaction is carboxy-S-adenosyl-L-methionine + 5-hydroxyuridine(34) in tRNA = 5-carboxymethoxyuridine(34) in tRNA + S-adenosyl-L-homocysteine + H(+). Its function is as follows. Catalyzes carboxymethyl transfer from carboxy-S-adenosyl-L-methionine (Cx-SAM) to 5-hydroxyuridine (ho5U) to form 5-carboxymethoxyuridine (cmo5U) at position 34 in tRNAs. This Marinobacter nauticus (strain ATCC 700491 / DSM 11845 / VT8) (Marinobacter aquaeolei) protein is tRNA U34 carboxymethyltransferase.